The following is a 1012-amino-acid chain: Structural polyprotein (1012 aa).

An a divalent metal cation-binding site is contributed by Asp-30. The Peptidase S50 domain occupies 513–755 (ADKGYEVVAN…AGRQYHLAMA (243 aa)). Ser-652 acts as the Nucleophile in catalysis. Lys-692 is a catalytic residue. Positions 969-1012 (AMEMKHRNPRRALPKPKPKPNAPTQRPPGRLGRWIRTVSDEDLE) are disordered. Basic residues predominate over residues 975-986 (RNPRRALPKPKP). The interval 1003–1012 (IRTVSDEDLE) is interaction with VP1 protein.

Homotrimer. A central divalent metal stabilizes the VP2 trimer. Interacts with host ITGA4/ITGB1. In terms of assembly, homodimer. Interacts (via C-terminus) with VP1 in the cytoplasm. Interacts with VP2. Post-translationally, specific enzymatic cleavages yield mature proteins. The capsid assembly seems to be regulated by polyprotein processing. The protease VP4 cleaves itself off the polyprotein, thus releasing pre-VP2 and VP3 within the infected cell. During capsid assembly, the C-terminus of pre-VP2 is further processed by VP4, giving rise to VP2, the external capsid protein and three small peptides that all stay closely associated with the capsid.

It is found in the virion. The protein resides in the host cytoplasm. Capsid protein VP2 self assembles to form an icosahedral capsid with a T=13 symmetry, about 70 nm in diameter, and consisting of 260 VP2 trimers. The capsid encapsulates the genomic dsRNA. VP2 is also involved in attachment and entry into the host cell by interacting with host ITGA4/ITGB1. In terms of biological role, the precursor of VP2 plays an important role in capsid assembly. First, pre-VP2 and VP2 oligomers assemble to form a procapsid. Then, the pre-VP2 intermediates may be processed into VP2 proteins by proteolytic cleavage mediated by VP4 to obtain the mature virion. The final capsid is composed of pentamers and hexamers but VP2 has a natural tendency to assemble into all-pentameric structures. Therefore pre-VP2 may be required to allow formation of the hexameric structures. Its function is as follows. Protease VP4 is a serine protease that cleaves the polyprotein into its final products. Pre-VP2 is first partially cleaved, and may be completely processed by VP4 upon capsid maturation. Functionally, capsid protein VP3 plays a key role in virion assembly by providing a scaffold for the capsid made of VP2. May self-assemble to form a T=4-like icosahedral inner-capsid composed of at least 180 trimers. Plays a role in genomic RNA packaging by recruiting VP1 into the capsid and interacting with the dsRNA genome segments to form a ribonucleoprotein complex. Additionally, the interaction of the VP3 C-terminal tail with VP1 removes the inherent structural blockade of the polymerase active site. Thus, VP3 can also function as a transcriptional activator. Structural peptide 1 is a small peptide derived from pre-VP2 C-terminus. It destabilizes and perforates cell membranes, suggesting a role during entry. In terms of biological role, structural peptide 2 is a small peptide derived from pVP2 C-terminus. It is not essential for the virus viability, but viral growth is affected when missing. Its function is as follows. Structural peptide 3 is a small peptide derived from pVP2 C-terminus. It is not essential for the virus viability, but viral growth is affected when missing. Functionally, structural peptide 4 is a small peptide derived from pVP2 C-terminus. It is essential for the virus viability. The polypeptide is Structural polyprotein (Avian infectious bursal disease virus (strain Cu-1) (IBDV)).